Here is a 194-residue protein sequence, read N- to C-terminus: AP-3 complex subunit sigma (194 aa).

This sequence belongs to the adaptor complexes small subunit family. As to quaternary structure, adaptor protein complex 3 (AP-3) is a heterotetramer composed of 2 large adaptins (APL5 and APL6), a medium adaptin (APM3) and a small adaptin (APS3).

The protein resides in the golgi apparatus. The protein localises to the cytoplasmic vesicle membrane. Part of the AP-3 complex, an adaptor-related complex which is not clathrin-associated. The complex is associated with the Golgi region as well as more peripheral structures. It facilitates the budding of vesicles from the Golgi membrane and may be directly involved in trafficking to the vacuole. Required for the transport via the ALP pathway, which directs the transport of the cargo proteins PHO8 and VAM3 to the vacuole. This Saccharomyces cerevisiae (strain ATCC 204508 / S288c) (Baker's yeast) protein is AP-3 complex subunit sigma (APS3).